Consider the following 172-residue polypeptide: Translationally-controlled tumor protein (172 aa).

One can recognise a TCTP domain in the interval 1–172 (MIIYRDLISH…FKDGLEMEKC (172 aa)). A Phosphoserine; by PLK1 modification is found at serine 46. At serine 53 the chain carries Phosphoserine. Phosphoserine; by PLK1 is present on serine 64. The tract at residues 70-172 (VDIVMNHHLQ…FKDGLEMEKC (103 aa)) is required for reduction of TSC22D1 protein stability.

Belongs to the TCTP family. Homodimer. Interacts with STEAP3. Interacts with TSC22D1; interaction results in the destabilization of TSC22D1 protein. As to expression, found in several healthy and tumoral cells including erythrocytes, hepatocytes, macrophages, platelets, keratinocytes, erythroleukemia cells, gliomas, melanomas, hepatoblastomas, and lymphomas. It cannot be detected in kidney and renal cell carcinoma (RCC). Expressed in placenta and prostate.

The protein localises to the cytoplasm. Functionally, involved in calcium binding and microtubule stabilization. Acts as a negative regulator of TSC22D1-mediated apoptosis, via interaction with and destabilization of TSC22D1 protein. In Homo sapiens (Human), this protein is Translationally-controlled tumor protein (TPT1).